Consider the following 556-residue polypeptide: 2-isopropylmalate synthase (556 aa).

Residues proline 33–aspartate 307 enclose the Pyruvate carboxyltransferase domain. Aspartate 42, histidine 246, histidine 248, and asparagine 282 together coordinate Mg(2+). The interval alanine 439–alanine 556 is regulatory domain.

The protein belongs to the alpha-IPM synthase/homocitrate synthase family. LeuA type 2 subfamily. As to quaternary structure, homodimer. Mg(2+) serves as cofactor.

Its subcellular location is the cytoplasm. It catalyses the reaction 3-methyl-2-oxobutanoate + acetyl-CoA + H2O = (2S)-2-isopropylmalate + CoA + H(+). Its pathway is amino-acid biosynthesis; L-leucine biosynthesis; L-leucine from 3-methyl-2-oxobutanoate: step 1/4. Catalyzes the condensation of the acetyl group of acetyl-CoA with 3-methyl-2-oxobutanoate (2-ketoisovalerate) to form 3-carboxy-3-hydroxy-4-methylpentanoate (2-isopropylmalate). The chain is 2-isopropylmalate synthase from Pseudomonas savastanoi pv. phaseolicola (strain 1448A / Race 6) (Pseudomonas syringae pv. phaseolicola (strain 1448A / Race 6)).